Here is a 472-residue protein sequence, read N- to C-terminus: Nuclear receptor subfamily 0 group B member 1 (472 aa).

A run of 3 repeats spans residues Met-1–Cys-67, Phe-68–Cys-135, and Phe-136–Tyr-202. The 4 X 67 AA tandem repeats stretch occupies residues Met-1 to Val-255. 3 short sequence motifs (LXXLL motif) span residues Leu-13–Leu-17, Leu-80–Leu-84, and Leu-148–Leu-152. The 282-residue stretch at Gln-190–Lys-471 folds into the NR LBD domain. The 4; truncated repeat unit spans residues Val-203–Val-255. Disordered stretches follow at residues Val-214–Trp-237 and Arg-326–Gln-345. Positions Met-463–Leu-468 match the AF-2 motif motif.

Belongs to the nuclear hormone receptor family. NR0 subfamily. Homodimer. Interacts with NR5A1, NR5A2, NR0B2 and with COPS2. Interacts with ESRRB; represses ESRRB activity at the GATA6 promoter.

Its subcellular location is the nucleus. It localises to the cytoplasm. Functionally, nuclear receptor that lacks a DNA-binding domain and acts as a corepressor that inhibits the transcriptional activity of other nuclear receptors through heterodimeric interactions. Component of a cascade required for the development of the hypothalamic-pituitary-adrenal-gonadal axis. May also have a role in the development of the embryo and in the maintenance of embryonic stem cell pluripotency. This is Nuclear receptor subfamily 0 group B member 1 (Nr0b1) from Rattus norvegicus (Rat).